A 254-amino-acid polypeptide reads, in one-letter code: Probable phosphatase TTE1963 (254 aa).

Positions 14, 16, 22, 47, 80, 108, 139, 200, and 202 each coordinate Zn(2+).

Belongs to the PHP family. Zn(2+) is required as a cofactor.

The polypeptide is Probable phosphatase TTE1963 (Caldanaerobacter subterraneus subsp. tengcongensis (strain DSM 15242 / JCM 11007 / NBRC 100824 / MB4) (Thermoanaerobacter tengcongensis)).